Consider the following 361-residue polypeptide: Ribosomal RNA large subunit methyltransferase M (361 aa).

S-adenosyl-L-methionine-binding positions include Ser187, 220–223, Asp239, Asp259, and Asp276; that span reads CPGG. The Proton acceptor role is filled by Lys305.

Belongs to the class I-like SAM-binding methyltransferase superfamily. RNA methyltransferase RlmE family. RlmM subfamily. In terms of assembly, monomer.

Its subcellular location is the cytoplasm. It catalyses the reaction cytidine(2498) in 23S rRNA + S-adenosyl-L-methionine = 2'-O-methylcytidine(2498) in 23S rRNA + S-adenosyl-L-homocysteine + H(+). Its function is as follows. Catalyzes the 2'-O-methylation at nucleotide C2498 in 23S rRNA. The sequence is that of Ribosomal RNA large subunit methyltransferase M from Shewanella sp. (strain MR-4).